The following is a 182-amino-acid chain: UPF0254 protein MK0012 (182 aa).

It belongs to the UPF0254 family.

The sequence is that of UPF0254 protein MK0012 from Methanopyrus kandleri (strain AV19 / DSM 6324 / JCM 9639 / NBRC 100938).